The sequence spans 495 residues: tRNA-guanine(15) transglycosylase (495 aa).

Residue D83 is the Nucleophile of the active site. D118 contacts substrate. Zn(2+) is bound by residues C273 and C278.

The protein belongs to the archaeosine tRNA-ribosyltransferase family. The cofactor is Zn(2+).

It carries out the reaction guanosine(15) in tRNA + 7-cyano-7-deazaguanine = 7-cyano-7-carbaguanosine(15) in tRNA + guanine. Its pathway is tRNA modification; archaeosine-tRNA biosynthesis. In terms of biological role, exchanges the guanine residue with 7-cyano-7-deazaguanine (preQ0) at position 15 in the dihydrouridine loop (D-loop) of archaeal tRNAs. This is tRNA-guanine(15) transglycosylase from Pyrobaculum aerophilum (strain ATCC 51768 / DSM 7523 / JCM 9630 / CIP 104966 / NBRC 100827 / IM2).